An 874-amino-acid polypeptide reads, in one-letter code: Leucine--tRNA ligase (874 aa).

The 'HIGH' region motif lies at 47 to 57 (PYPSGKLHMGH). Residues 636–640 (KMSKS) carry the 'KMSKS' region motif. Lys-639 provides a ligand contact to ATP.

Belongs to the class-I aminoacyl-tRNA synthetase family.

It is found in the cytoplasm. The enzyme catalyses tRNA(Leu) + L-leucine + ATP = L-leucyl-tRNA(Leu) + AMP + diphosphate. The chain is Leucine--tRNA ligase from Acinetobacter baumannii (strain SDF).